Reading from the N-terminus, the 175-residue chain is uncharacterized protein (175 aa).

This is an uncharacterized protein from Connochaetes taurinus (Blue wildebeest).